The sequence spans 639 residues: CTTNBP2 N-terminal-like protein (639 aa).

Residues 87–285 (MKQCKNMQER…DLEASHQHSS (199 aa)) are a coiled coil. A phosphoserine mark is found at serine 284 and serine 285. 3 disordered regions span residues 387–430 (VENG…PCSS), 463–490 (RHKF…LSPT), and 511–609 (RFTS…AASL). Low complexity-rich tracts occupy residues 407–430 (PSSG…PCSS) and 467–477 (QSQADQDQQAS). 7 positions are modified to phosphoserine: serine 481, serine 488, serine 523, serine 527, serine 560, serine 563, and serine 568. The segment covering 511–529 (RFTSQQGPIKPVSPNSSPF) has biased composition (polar residues). Threonine 570 and threonine 590 each carry phosphothreonine. Low complexity predominate over residues 587 to 600 (PGLTPSPSATTPLT). Serine 592 is modified (phosphoserine).

Interacts with CTTN/cortactin; this interaction may redistribute CTTN to stress fibers. May form homomers. Associates with the core of STRIPAK complexes composed of PP2A catalytic and scaffolding subunits, the striatins (PP2A regulatory subunits), the striatin-associated proteins MOB4, STRIP1 and STRIP2, PDCD10 and members of the STE20 kinases, such as STK24 and STK26.

The protein localises to the cell projection. Its subcellular location is the lamellipodium. The protein resides in the cytoplasm. It is found in the cytoskeleton. It localises to the stress fiber. Its function is as follows. Regulates lamellipodial actin dynamics in a CTTN-dependent manner. Associates with core striatin-interacting phosphatase and kinase (STRIPAK) complex to form CTTNBP2NL-STRIPAK complexes. STRIPAK complexes have critical roles in protein (de)phosphorylation and are regulators of multiple signaling pathways including Hippo, MAPK, nuclear receptor and cytoskeleton remodeling. Different types of STRIPAK complexes are involved in a variety of biological processes such as cell growth, differentiation, apoptosis, metabolism and immune regulation. This chain is CTTNBP2 N-terminal-like protein (CTTNBP2NL), found in Pongo abelii (Sumatran orangutan).